The chain runs to 314 residues: Hydroxyethylthiazole kinase (314 aa).

Met70 contributes to the substrate binding site. The ATP site is built by Arg145 and Ser217. Residue Gly244 coordinates substrate.

This sequence belongs to the Thz kinase family. Requires Mg(2+) as cofactor.

The enzyme catalyses 5-(2-hydroxyethyl)-4-methylthiazole + ATP = 4-methyl-5-(2-phosphooxyethyl)-thiazole + ADP + H(+). The protein operates within cofactor biosynthesis; thiamine diphosphate biosynthesis; 4-methyl-5-(2-phosphoethyl)-thiazole from 5-(2-hydroxyethyl)-4-methylthiazole: step 1/1. Functionally, catalyzes the phosphorylation of the hydroxyl group of 4-methyl-5-beta-hydroxyethylthiazole (THZ). The chain is Hydroxyethylthiazole kinase from Bifidobacterium longum (strain NCC 2705).